The sequence spans 456 residues: Solute carrier family 49 member 4 homolog (456 aa).

Residues 1 to 29 are Cytoplasmic-facing; that stretch reads MGLEWSSPGERQPLLFPGGPRSPRVFGRR. A Di-leucine motif; mediates lysosomal localization motif is present at residues 14-15; sequence LL. A helical membrane pass occupies residues 30–50; the sequence is WLVLLLFSVLAFLQGLVWNSW. Residues 51–67 are Lumenal-facing; the sequence is GPIQISARTAYKFSGLD. A helical transmembrane segment spans residues 68–88; sequence IALLVLWGPIGFLPCFLFMWL. Residues 89–95 are Cytoplasmic-facing; sequence MDNRGLR. The helical transmembrane segment at 96-116 threads the bilayer; that stretch reads ITVLLTALLMVLGAGLRCVPV. Residues 117 to 123 lie on the Lumenal side of the membrane; that stretch reads EDLAIRR. Residues 124–144 traverse the membrane as a helical segment; that stretch reads ILIHGGQLLNGFAGPTVMNAA. Topologically, residues 145 to 162 are cytoplasmic; sequence PFLSTTWFAPDERATATA. The helical transmembrane segment at 163–183 threads the bilayer; that stretch reads IASMLNYLGGACAFLVGPLVV. The Lumenal portion of the chain corresponds to 184–207; it reads PAPNSTSGLLLYSGSTDAIKDRIE. Asn187 is a glycosylation site (N-linked (GlcNAc...) asparagine). Residues 208–228 traverse the membrane as a helical segment; sequence AVMYAEFGIIFVVFAAILAYF. Over 229 to 259 the chain is Cytoplasmic; the sequence is PARPPVPPSVAAASRRLSYRTSIFRLLSNLR. A helical membrane pass occupies residues 260–280; that stretch reads FLLIVLAYAIPLGFYSGWIGV. Residues 281 to 292 lie on the Lumenal side of the membrane; the sequence is LDLILTPVHVTQ. A helical membrane pass occupies residues 293-313; the sequence is VDAGWVGFWSIVGGCVVGIAV. At 314–326 the chain is on the cytoplasmic side; sequence GRFADSIRGVLKP. The helical transmembrane segment at 327-347 threads the bilayer; sequence ILLLLFSGATLSATWFTLTFL. Residues 348 to 362 are Lumenal-facing; sequence SNVTHLPLTTATLYT. Asn349 is a glycosylation site (N-linked (GlcNAc...) asparagine). Residues 363–383 form a helical membrane-spanning segment; the sequence is SCILIGVFLNGTVPIFFELFV. Residues 384-392 are Cytoplasmic-facing; sequence ETVYPIPEG. Residues 393-413 traverse the membrane as a helical segment; that stretch reads IACGVVTFLSNIFMGVLLVFL. Residues 414 to 420 lie on the Lumenal side of the membrane; sequence TMYQMEL. Residues 421–441 form a helical membrane-spanning segment; it reads SWLNWCLTGSCFLSLFFIACF. Residues 442-456 lie on the Cytoplasmic side of the membrane; sequence RESYDRLYLDVFVSV.

This sequence belongs to the major facilitator superfamily.

It is found in the lysosome membrane. It catalyses the reaction pyridoxine(out) + n H(+)(out) = pyridoxine(in) + n H(+)(in). In terms of biological role, mediates H(+)-dependent pyridoxine transport. The protein is Solute carrier family 49 member 4 homolog (slc49a4) of Xenopus laevis (African clawed frog).